A 96-amino-acid chain; its full sequence is Elicitor peptide 3 (96 aa).

The propeptide occupies 1-73; it reads MENLRNGEDN…EEEEEDGMTI (73 aa). The interval 32-96 is disordered; that stretch reads SGLESSSSSS…PSSGKGGKHN (65 aa). The segment covering 35–49 has biased composition (low complexity); the sequence is ESSSSSSSSCDLSSS. Acidic residues predominate over residues 52 to 71; the sequence is EEDESIDIKEEEEEEEEDGM.

The protein belongs to the brassicaceae elicitor peptide family.

Its function is as follows. Elicitor of plant defense. The polypeptide is Elicitor peptide 3 (PEP3) (Arabidopsis thaliana (Mouse-ear cress)).